We begin with the raw amino-acid sequence, 502 residues long: ATP synthase subunit alpha, chloroplastic (502 aa).

170–177 (GDRQTGKS) contributes to the ATP binding site.

This sequence belongs to the ATPase alpha/beta chains family. F-type ATPases have 2 components, CF(1) - the catalytic core - and CF(0) - the membrane proton channel. CF(1) has five subunits: alpha(3), beta(3), gamma(1), delta(1), epsilon(1). CF(0) has four main subunits: a, b, b' and c.

The protein resides in the plastid. It localises to the chloroplast thylakoid membrane. The catalysed reaction is ATP + H2O + 4 H(+)(in) = ADP + phosphate + 5 H(+)(out). Produces ATP from ADP in the presence of a proton gradient across the membrane. The alpha chain is a regulatory subunit. This Guillardia theta (Cryptophyte) protein is ATP synthase subunit alpha, chloroplastic.